The sequence spans 372 residues: 3-galactosyl-N-acetylglucosaminide 4-alpha-L-fucosyltransferase FUT3 (372 aa).

At 1–15 (MDPLGAAKTQWPWRR) the chain is on the cytoplasmic side. Residues 16–34 (CLAALLFQLLVAVCFFSYL) form a helical; Signal-anchor for type II membrane protein membrane-spanning segment. Topologically, residues 35 to 372 (RVSRDDATGS…MVRSIAAWFT (338 aa)) are lumenal. Residues 40 to 68 (DATGSPRPGLMAVEPVTGAPGGSSRQDTT) are disordered. 2 N-linked (GlcNAc...) asparagine glycosylation sites follow: N165 and N196.

Belongs to the glycosyltransferase 10 family. Glycosylated.

It is found in the golgi apparatus. The protein resides in the golgi stack membrane. The enzyme catalyses a beta-D-galactosyl-(1-&gt;3)-N-acetyl-beta-D-glucosaminyl derivative + GDP-beta-L-fucose = a beta-D-galactosyl-(1-&gt;3)-[alpha-L-fucosyl-(1-&gt;4)]-N-acetyl-beta-D-glucosaminyl derivative + GDP + H(+). It catalyses the reaction an N-acetyl-alpha-neuraminyl-(2-&gt;3)-beta-D-galactosyl-(1-&gt;4)-N-acetyl-beta-D-glucosaminyl derivative + GDP-beta-L-fucose = an alpha-Neu5Ac-(2-&gt;3)-beta-D-Gal-(1-&gt;4)-[alpha-L-Fuc-(1-&gt;3)]-beta-D-GlcNAc derivative + GDP + H(+). The catalysed reaction is a beta-D-galactosyl-(1-&gt;4)-N-acetyl-beta-D-glucosaminyl derivative + GDP-beta-L-fucose = a beta-D-galactosyl-(1-&gt;4)-[alpha-L-fucosyl-(1-&gt;3)]-N-acetyl-beta-D-glucosaminyl derivative + GDP + H(+). It carries out the reaction an alpha-Neu5Ac-(2-&gt;3)-beta-D-Gal-(1-&gt;4)-beta-D-GlcNAc-(1-&gt;3)-beta-D-Gal-(1-&gt;4)-[alpha-L-Fuc-(1-&gt;3)]-beta-D-GlcNAc derivative + GDP-beta-L-fucose = an alpha-Neu5Ac-(2-&gt;3)-beta-D-Gal-(1-&gt;4)-[alpha-L-Fuc-(1-&gt;3)]-beta-D-GlcNAc-(1-&gt;3)-beta-D-Gal-(1-&gt;4)-[alpha-L-Fuc-(1-&gt;3)]-beta-D-GlcNAc derivative + GDP + H(+). The enzyme catalyses Lc4Cer + GDP-beta-L-fucose = a lactoside III(4)-a-Fuc-Lc4Cer + GDP + H(+). It catalyses the reaction a beta-D-Gal-(1-&gt;3)-beta-D-GlcNAc-(1-&gt;3)-beta-D-Gal-(1-&gt;4)-beta-D-Glc-(1&lt;-&gt;1')-Cer(d18:1(4E)) + GDP-beta-L-fucose = a III(4)-a-Fuc-Lc4Cer(d18:1(4E)) + GDP + H(+). The catalysed reaction is N-acetyl-alpha-neuraminosyl-(2-&gt;3)-beta-D-galactosyl-(1-&gt;3)-[N-acetyl-alpha-neuraminosyl-(2-&gt;6)]-N-acetyl-beta-D-glucosaminyl-(1-&gt;3)-beta-D-galactosyl-(1-&gt;4)-beta-D-glucosyl-(1&lt;-&gt;1')-N-acyl-sphing-4-enine + GDP-beta-L-fucose = N-acetyl-alpha-neuraminosyl-(2-&gt;3)-beta-D-galactosyl-(1-&gt;3)-alpha-L-fucosyl-(1-&gt;4)-[N-acetyl-alpha-neuraminosyl-(2-&gt;6)-N-acetyl-beta-D-glucosaminyl-(1-&gt;3)]-beta-D-galactosyl-(1-&gt;4)-beta-D-glucosyl-(1&lt;-&gt;1')-N-acyl-sphing-4-enine + GDP + H(+). It carries out the reaction N-acetyl-alpha-neuraminosyl-(2-&gt;3)-beta-D-galactosyl-(1-&gt;3)-N-acetyl-beta-D-glucosaminyl-(1-&gt;3)-beta-D-galactosyl-(1-&gt;4)-beta-D-glucosyl-(1&lt;-&gt;1')-N-acyl-sphing-4-enine + GDP-beta-L-fucose = N-acetyl-alpha-neuraminosyl-(2-&gt;3)-beta-D-galactosyl-(1-&gt;3)-alpha-L-fucosyl-(1-&gt;4)-[N-acetyl-beta-D-glucosaminyl-(1-&gt;3)]-beta-D-galactosyl-(1-&gt;4)-beta-D-glucosyl-(1&lt;-&gt;1')-N-acyl-sphing-4-enine + GDP + H(+). The enzyme catalyses beta-D-galactosyl-(1-&gt;3)-N-acetyl-D-glucosamine + GDP-beta-L-fucose = beta-D-galactosyl-(1-&gt;3)-[alpha-L-fucosyl-(1-&gt;4)]-N-acetyl-D-glucosamine + GDP + H(+). It catalyses the reaction alpha-L-Fuc-(1-&gt;2)-beta-D-Gal-(1-&gt;3)-D-GlcNAc + GDP-beta-L-fucose = alpha-L-Fuc-(1-&gt;2)-beta-D-Gal-(1-&gt;3)-[alpha-L-Fuc-(1-&gt;4)]-D-GlcNAc + GDP + H(+). The catalysed reaction is alpha-L-Fuc-(1-&gt;2)-beta-D-Gal-(1-&gt;4)-D-GlcNAc + GDP-beta-L-fucose = alpha-L-Fuc-(1-&gt;2)-beta-D-Gal-(1-&gt;4)-[alpha-L-Fuc-(1-&gt;3)]-D-GlcNAc + GDP + H(+). It carries out the reaction beta-D-galactosyl-(1-&gt;4)-N-acetyl-D-glucosamine + GDP-beta-L-fucose = beta-D-galactosyl-(1-&gt;4)-[alpha-L-fucosyl-(1-&gt;3)]-N-acetyl-D-glucosamine + GDP + H(+). The enzyme catalyses lactose + GDP-beta-L-fucose = beta-D-galactosyl-(1-&gt;4)-[alpha-L-fucosyl-(1-&gt;3)]-D-glucose + GDP + H(+). It catalyses the reaction an alpha-Neu5Ac-(2-&gt;3)-beta-D-Gal-(1-&gt;3)-D-GlcNAc derivative + GDP-beta-L-fucose = an alpha-Neu5Ac-(2-&gt;3)-beta-D-Gal-(1-&gt;3)-[alpha-L-Fuc-(1-&gt;4)]-beta-D-GlcNAc derivative + GDP + H(+). The protein operates within protein modification; protein glycosylation. Catalyzes the transfer of L-fucose, from a guanosine diphosphate-beta-L-fucose, to both the subterminal N-acetyl glucosamine (GlcNAc) of type 1 chain (beta-D-Gal-(1-&gt;3)-beta-D-GlcNAc) glycolipids and oligosaccharides via an alpha(1,4) linkage, and the subterminal glucose (Glc) or GlcNAc of type 2 chain (beta-D-Gal-(1-&gt;4)-beta-D-GlcNAc) oligosaccharides via an alpha(1,3) linkage, independently of the presence of terminal alpha-L-fucosyl-(1,2) moieties on the terminal galactose of these acceptors and participates in the blood groups Lewis determination and expression of Lewis a (Le(a)), lewis b (Le(b)), Lewis x/SSEA-1 (Le(x)) and lewis y (Le(y)) antigens. Also catalyzes the transfer of L-fucose to subterminal GlcNAc of sialyl- and disialyl-lactotetraosylceramide to produce sialyl Lewis a (sLe(a)) and disialyl Lewis a via an alpha(1,4) linkage and therefore may regulate cell surface sialyl Lewis a expression and consequently regulates adhesive properties to E-selectin, cell proliferation and migration. Catalyzes the transfer of an L-fucose to 3'-sialyl-N-acetyllactosamine by an alpha(1,3) linkage, which allows the formation of sialyl-Lewis x structure and therefore may regulate the sialyl-Lewis x surface antigen expression and consequently adhesive properties to E-selectin. Prefers type 1 chain over type 2 acceptors. Type 1 tetrasaccharide is a better acceptor than type 1 disaccharide suggesting that a beta anomeric configuration of GlcNAc in the substrate is preferred. Lewis-positive (Le(+)) individuals have an active enzyme while Lewis-negative (Le(-)) individuals have an inactive enzyme. The chain is 3-galactosyl-N-acetylglucosaminide 4-alpha-L-fucosyltransferase FUT3 from Pongo pygmaeus (Bornean orangutan).